We begin with the raw amino-acid sequence, 477 residues long: Argininosuccinate lyase (477 aa).

Belongs to the lyase 1 family. Argininosuccinate lyase subfamily.

The protein resides in the cytoplasm. The catalysed reaction is 2-(N(omega)-L-arginino)succinate = fumarate + L-arginine. It functions in the pathway amino-acid biosynthesis; L-arginine biosynthesis; L-arginine from L-ornithine and carbamoyl phosphate: step 3/3. The protein is Argininosuccinate lyase of Acinetobacter baumannii (strain AB307-0294).